A 367-amino-acid chain; its full sequence is Glutamate 5-kinase (367 aa).

An ATP-binding site is contributed by Lys8. 3 residues coordinate substrate: Ser49, Asp136, and Asn148. ATP is bound by residues 168–169 (TD) and 210–216 (TGGMATK). The PUA domain occupies 275 to 353 (TGKLYLDRGA…EEIPTILGYS (79 aa)).

Belongs to the glutamate 5-kinase family.

The protein resides in the cytoplasm. It catalyses the reaction L-glutamate + ATP = L-glutamyl 5-phosphate + ADP. It functions in the pathway amino-acid biosynthesis; L-proline biosynthesis; L-glutamate 5-semialdehyde from L-glutamate: step 1/2. Catalyzes the transfer of a phosphate group to glutamate to form L-glutamate 5-phosphate. The protein is Glutamate 5-kinase of Cyanothece sp. (strain PCC 7425 / ATCC 29141).